The following is a 192-amino-acid chain: Fe/S biogenesis protein NfuA (192 aa).

[4Fe-4S] cluster contacts are provided by Cys-149 and Cys-152.

It belongs to the NfuA family. As to quaternary structure, homodimer. Requires [4Fe-4S] cluster as cofactor.

In terms of biological role, involved in iron-sulfur cluster biogenesis. Binds a 4Fe-4S cluster, can transfer this cluster to apoproteins, and thereby intervenes in the maturation of Fe/S proteins. Could also act as a scaffold/chaperone for damaged Fe/S proteins. The chain is Fe/S biogenesis protein NfuA from Aeromonas salmonicida (strain A449).